Reading from the N-terminus, the 125-residue chain is Large ribosomal subunit protein bL12 (125 aa).

This sequence belongs to the bacterial ribosomal protein bL12 family. In terms of assembly, homodimer. Part of the ribosomal stalk of the 50S ribosomal subunit. Forms a multimeric L10(L12)X complex, where L10 forms an elongated spine to which 2 to 4 L12 dimers bind in a sequential fashion. Binds GTP-bound translation factors.

Forms part of the ribosomal stalk which helps the ribosome interact with GTP-bound translation factors. Is thus essential for accurate translation. This is Large ribosomal subunit protein bL12 from Nitrobacter winogradskyi (strain ATCC 25391 / DSM 10237 / CIP 104748 / NCIMB 11846 / Nb-255).